The following is a 553-amino-acid chain: MITNKIKIFLISLIFISGVYALQVDAPQYQPNVIHPGDDVDLWIKITNDNYDNEVKNIVVEVSPHYPFELRQVNPIKGKATISHLNPGESDTVYFKLHVDENAPSRDYEIDVKVSYDEINKEDGKETIHHYEITKIYYLHVYGIASFEINGNFSLIPSKTQTVPIEIINTGTGTAKEVNLYIGYSLNSVNAGSESVEVSAYGTTKTQEKTIYYPTAVPISNLPISPVGETKFYLGALKPDNSRVINLKLYTASNLVEGCYQIPAVITWIDEDGTKRAEQITIGAYVKGDILLGISNVVTDPKEIKPGTTYVRIDVTITNNGHAEAKDVKLKLITNKPFKDSWSNCNIKDVGNLLPGVSKTVSFYVDVDKYASAKHYKLPIEISYLDTANNKYKTEKFIDIYVKPKPLFEIITKEVNVTAGKENTVYITIKNVGSEKAERVKISAIRNSGQPFDYPIKSDTIGTLYPNQTGTGVIVIDVDKNAESKPYIITIEIRCAGDSDEGDNNVYVYQEPLKVVVNNSNSKSYWILGIIVVIAIVLVVGYVFKRKNSKDKE.

The next 2 membrane-spanning stretches (helical) occupy residues 6–26 (IKIF…QVDA) and 524–544 (SYWI…GYVF).

This sequence to M.jannaschii MJ0795 and MJ1506.

Its subcellular location is the cell membrane. This is an uncharacterized protein from Methanocaldococcus jannaschii (strain ATCC 43067 / DSM 2661 / JAL-1 / JCM 10045 / NBRC 100440) (Methanococcus jannaschii).